We begin with the raw amino-acid sequence, 120 residues long: Non-specific lipid-transfer protein (120 aa).

The N-terminal stretch at 1 to 26 is a signal peptide; the sequence is MGVLRSSFVAMMVMYMVLATTPNAEA. 4 disulfides stabilise this stretch: Cys-30–Cys-79, Cys-40–Cys-56, Cys-57–Cys-102, and Cys-77–Cys-116.

This sequence belongs to the plant LTP family. Expressed in protoderm cells of somatic and zygotic embryos, and transiently expressed in epidermal cell layers of leaves, flowers and seeds.

Functionally, plant non-specific lipid-transfer proteins transfer phospholipids as well as galactolipids across membranes. May play a role in wax or cutin deposition in the cell walls of expanding epidermal cells and certain secretory tissues. This is Non-specific lipid-transfer protein (EP2) from Daucus carota (Wild carrot).